Consider the following 93-residue polypeptide: Small ribosomal subunit protein uS19 (93 aa).

It belongs to the universal ribosomal protein uS19 family.

Functionally, protein S19 forms a complex with S13 that binds strongly to the 16S ribosomal RNA. The protein is Small ribosomal subunit protein uS19 of Campylobacter jejuni subsp. jejuni serotype O:6 (strain 81116 / NCTC 11828).